Consider the following 256-residue polypeptide: ATP synthase peripheral stalk subunit b, mitochondrial (256 aa).

The transit peptide at 1-42 (MLSRVVLSAAATAASSLKNAAFLGPGVLQATRTFHTGQPHLA) directs the protein to the mitochondrion. Residue Lys-131 is modified to N6-succinyllysine. An N6-acetyllysine mark is found at Lys-139, Lys-154, Lys-162, Lys-221, Lys-233, and Lys-244.

The protein belongs to the eukaryotic ATPase B chain family. As to quaternary structure, component of the ATP synthase complex composed at least of ATP5F1A/subunit alpha, ATP5F1B/subunit beta, ATP5MC1/subunit c (homooctomer), MT-ATP6/subunit a, MT-ATP8/subunit 8, ATP5ME/subunit e, ATP5MF/subunit f, ATP5MG/subunit g, ATP5MK/subunit k, ATP5MJ/subunit j, ATP5F1C/subunit gamma, ATP5F1D/subunit delta, ATP5F1E/subunit epsilon, ATP5PF/subunit F6, ATP5PB/subunit b, ATP5PD/subunit d, ATP5PO/subunit OSCP. ATP synthase complex consists of a soluble F(1) head domain (subunits alpha(3) and beta(3)) - the catalytic core - and a membrane F(0) domain - the membrane proton channel (subunits c, a, 8, e, f, g, k and j). These two domains are linked by a central stalk (subunits gamma, delta, and epsilon) rotating inside the F1 region and a stationary peripheral stalk (subunits F6, b, d, and OSCP).

The protein resides in the mitochondrion. It is found in the mitochondrion inner membrane. Its function is as follows. Subunit b, of the mitochondrial membrane ATP synthase complex (F(1)F(0) ATP synthase or Complex V) that produces ATP from ADP in the presence of a proton gradient across the membrane which is generated by electron transport complexes of the respiratory chain. ATP synthase complex consist of a soluble F(1) head domain - the catalytic core - and a membrane F(1) domain - the membrane proton channel. These two domains are linked by a central stalk rotating inside the F(1) region and a stationary peripheral stalk. During catalysis, ATP synthesis in the catalytic domain of F(1) is coupled via a rotary mechanism of the central stalk subunits to proton translocation. In vivo, can only synthesize ATP although its ATP hydrolase activity can be activated artificially in vitro. Part of the complex F(0) domain. Part of the complex F(0) domain and the peripheric stalk, which acts as a stator to hold the catalytic alpha(3)beta(3) subcomplex and subunit a/ATP6 static relative to the rotary elements. This Pongo abelii (Sumatran orangutan) protein is ATP synthase peripheral stalk subunit b, mitochondrial.